The following is a 235-amino-acid chain: Phosphoribosylaminoimidazole-succinocarboxamide synthase (235 aa).

It belongs to the SAICAR synthetase family.

The enzyme catalyses 5-amino-1-(5-phospho-D-ribosyl)imidazole-4-carboxylate + L-aspartate + ATP = (2S)-2-[5-amino-1-(5-phospho-beta-D-ribosyl)imidazole-4-carboxamido]succinate + ADP + phosphate + 2 H(+). The protein operates within purine metabolism; IMP biosynthesis via de novo pathway; 5-amino-1-(5-phospho-D-ribosyl)imidazole-4-carboxamide from 5-amino-1-(5-phospho-D-ribosyl)imidazole-4-carboxylate: step 1/2. In Streptococcus pneumoniae (strain 70585), this protein is Phosphoribosylaminoimidazole-succinocarboxamide synthase.